The chain runs to 427 residues: Glucose-1-phosphate adenylyltransferase (427 aa).

Alpha-D-glucose 1-phosphate contacts are provided by residues Tyr121, Gly186, 201–202 (EK), and Ser219.

It belongs to the bacterial/plant glucose-1-phosphate adenylyltransferase family. Homotetramer.

The catalysed reaction is alpha-D-glucose 1-phosphate + ATP + H(+) = ADP-alpha-D-glucose + diphosphate. It participates in glycan biosynthesis; glycogen biosynthesis. Involved in the biosynthesis of ADP-glucose, a building block required for the elongation reactions to produce glycogen. Catalyzes the reaction between ATP and alpha-D-glucose 1-phosphate (G1P) to produce pyrophosphate and ADP-Glc. This is Glucose-1-phosphate adenylyltransferase from Corynebacterium diphtheriae (strain ATCC 700971 / NCTC 13129 / Biotype gravis).